Reading from the N-terminus, the 430-residue chain is UDP-N-acetylglucosamine 1-carboxyvinyltransferase (430 aa).

22–23 (KN) contributes to the phosphoenolpyruvate binding site. R102 is a binding site for UDP-N-acetyl-alpha-D-glucosamine. C126 (proton donor) is an active-site residue. C126 is modified (2-(S-cysteinyl)pyruvic acid O-phosphothioketal). Residues 131 to 135 (RPVDL), 172 to 175 (KVSV), D317, and I339 each bind UDP-N-acetyl-alpha-D-glucosamine.

The protein belongs to the EPSP synthase family. MurA subfamily.

It localises to the cytoplasm. It catalyses the reaction phosphoenolpyruvate + UDP-N-acetyl-alpha-D-glucosamine = UDP-N-acetyl-3-O-(1-carboxyvinyl)-alpha-D-glucosamine + phosphate. It participates in cell wall biogenesis; peptidoglycan biosynthesis. In terms of biological role, cell wall formation. Adds enolpyruvyl to UDP-N-acetylglucosamine. The polypeptide is UDP-N-acetylglucosamine 1-carboxyvinyltransferase (Rhizobium etli (strain ATCC 51251 / DSM 11541 / JCM 21823 / NBRC 15573 / CFN 42)).